Reading from the N-terminus, the 448-residue chain is Probable 3-ketoacyl-CoA thiolase (448 aa).

Cys110 serves as the catalytic Acyl-thioester intermediate. Catalysis depends on proton acceptor residues His402 and Cys432.

This sequence belongs to the thiolase-like superfamily. Thiolase family.

The protein localises to the mitochondrion. The enzyme catalyses an acyl-CoA + acetyl-CoA = a 3-oxoacyl-CoA + CoA. The protein operates within lipid metabolism; fatty acid beta-oxidation. Functionally, mitochondrial enzyme that catalyzes reactions of the mitochondrial beta-oxidation pathway. The polypeptide is Probable 3-ketoacyl-CoA thiolase (Caenorhabditis elegans).